The sequence spans 236 residues: 3-deoxy-D-manno-octulosonic acid kinase (236 aa).

The active site involves D166.

Belongs to the protein kinase superfamily. KdkA/RfaP family.

The protein localises to the cell inner membrane. It catalyses the reaction an alpha-Kdo-(2-&gt;6)-lipid IVA + ATP = a 4-O-phospho-alpha-Kdo-(2-&gt;6)-lipid IVA + ADP + H(+). It participates in bacterial outer membrane biogenesis; LPS core biosynthesis. Functionally, catalyzes the ATP-dependent phosphorylation of the 3-deoxy-D-manno-octulosonic acid (Kdo) residue in Kdo-lipid IV(A) at the 4-OH position. This is 3-deoxy-D-manno-octulosonic acid kinase from Photobacterium profundum (strain SS9).